The chain runs to 1602 residues: MAP kinase-activating death domain protein (1602 aa).

The region spanning 13 to 267 (YLVIVGARHP…VPVSGQKRVD (255 aa)) is the uDENN domain. Over residues 105 to 121 (PKEKAEGGAGPRGKEGA) the composition is skewed to basic and acidic residues. Positions 105 to 167 (PKEKAEGGAG…GKRRAKAGNR (63 aa)) are disordered. Residues 126–137 (ASEEAATESSES) show a composition bias toward low complexity. The span at 138-156 (GSTLQPPSADSTPDVNQSP) shows a compositional bias: polar residues. Phosphoserine is present on Ser-155. The segment covering 157–166 (RGKRRAKAGN) has biased composition (basic residues). The cDENN domain occupies 288-428 (RFTLVDFPLH…ESLELKKHLK (141 aa)). In terms of domain architecture, dDENN spans 430–564 (ALASMSLNTQ…LNPSNYAFQR (135 aa)). Disordered stretches follow at residues 603-635 (ALSV…SSYS) and 676-840 (QPQK…NSTE). Positions 614-629 (SDPTDDSGSDSMDYDD) are enriched in acidic residues. Phosphoserine is present on residues Ser-688 and Ser-691. The span at 688–698 (SENSQENLPLR) shows a compositional bias: polar residues. Low complexity predominate over residues 699–711 (SSSSTTASSSPST). Ser-778 carries the post-translational modification Phosphoserine. Over residues 789–803 (ESYTPRFSQHASGSR) the composition is skewed to polar residues. Phosphoserine occurs at positions 812, 817, and 819. Positions 826–839 (RASSPNSTVSNNST) are enriched in low complexity. Phosphoserine is present on residues Ser-857, Ser-861, Ser-895, Ser-900, and Ser-909. Disordered regions lie at residues 870–920 (KGAR…SSEN), 1030–1089 (KEPD…DTRS), and 1113–1231 (TEEK…RSSE). Positions 911-920 (QGRSSNSSEN) are enriched in polar residues. At Ser-1038 the chain carries Phosphoserine. Phosphothreonine occurs at positions 1040 and 1045. Ser-1089 is subject to Phosphoserine. Residues 1119–1134 (QISADSGVSLASASQR) show a composition bias toward polar residues. The segment covering 1151 to 1162 (SSSQDSEVSNSS) has biased composition (low complexity). Residues 1191–1209 (SRATLSDSEIETNSATSTI) show a composition bias toward polar residues. Thr-1194 is modified (phosphothreonine). Phosphoserine is present on residues Ser-1196 and Ser-1225. In terms of domain architecture, Death spans 1295 to 1370 (GMDQGPQEMI…GLVYSQQINE (76 aa)).

The protein belongs to the MADD family. In terms of assembly, interacts (via death domain) with TNFRSF1A (via death domain). Interacts with PIDD1. Interacts with YWHAZ. Interacts (via death domain) with KIF1B; links the motor KIF1B to Rab3-carrying vesicles in anterograde synaptic vesicle transport. Interacts with KIF1A. Interacts (via uDENN domain) with RAB3A, RAB3B, RAB3C and RAB3D; the GTP-bound form of the Rab proteins is preferred for interaction. In terms of tissue distribution, expressed in all tissues examined with the highest expression in brain.

It localises to the cell membrane. Its subcellular location is the cytoplasm. It is found in the cell projection. The protein localises to the axon. Functionally, guanyl-nucleotide exchange factor that regulates small GTPases of the Rab family. Converts GDP-bound inactive form of RAB27A and RAB27B to the GTP-bound active forms. Converts GDP-bound inactive form of RAB3A, RAB3C and RAB3D to the GTP-bound active forms, GTPases involved in synaptic vesicle exocytosis and vesicle secretion. Plays a role in synaptic vesicle formation and in vesicle trafficking at the neuromuscular junction. Involved in up-regulating a post-docking step of synaptic exocytosis in central synapses. Probably by binding to the motor proteins KIF1B and KIF1A, mediates motor-dependent transport of GTP-RAB3A-positive vesicles to the presynaptic nerve terminals. Plays a role in TNFA-mediated activation of the MAPK pathway, including ERK1/2. May link TNFRSF1A with MAP kinase activation. May be involved in the regulation of TNFA-induced apoptosis. The chain is MAP kinase-activating death domain protein from Rattus norvegicus (Rat).